An 872-amino-acid chain; its full sequence is Alanine--tRNA ligase (872 aa).

Zn(2+) is bound by residues histidine 567, histidine 571, cysteine 669, and histidine 673.

The protein belongs to the class-II aminoacyl-tRNA synthetase family. Requires Zn(2+) as cofactor.

It is found in the cytoplasm. It carries out the reaction tRNA(Ala) + L-alanine + ATP = L-alanyl-tRNA(Ala) + AMP + diphosphate. Catalyzes the attachment of alanine to tRNA(Ala) in a two-step reaction: alanine is first activated by ATP to form Ala-AMP and then transferred to the acceptor end of tRNA(Ala). Also edits incorrectly charged Ser-tRNA(Ala) and Gly-tRNA(Ala) via its editing domain. The protein is Alanine--tRNA ligase of Streptococcus agalactiae serotype III (strain NEM316).